The following is a 1517-amino-acid chain: DNA-directed RNA polymerase subunit beta' (1517 aa).

Positions 71, 73, 86, and 89 each coordinate Zn(2+). Mg(2+) contacts are provided by aspartate 482, aspartate 484, and aspartate 486. Residues cysteine 812, cysteine 886, cysteine 893, and cysteine 896 each coordinate Zn(2+).

This sequence belongs to the RNA polymerase beta' chain family. In terms of assembly, the RNAP catalytic core consists of 2 alpha, 1 beta, 1 beta' and 1 omega subunit. When a sigma factor is associated with the core the holoenzyme is formed, which can initiate transcription. Mg(2+) serves as cofactor. Zn(2+) is required as a cofactor.

The catalysed reaction is RNA(n) + a ribonucleoside 5'-triphosphate = RNA(n+1) + diphosphate. Functionally, DNA-dependent RNA polymerase catalyzes the transcription of DNA into RNA using the four ribonucleoside triphosphates as substrates. The chain is DNA-directed RNA polymerase subunit beta' from Campylobacter jejuni subsp. jejuni serotype O:6 (strain 81116 / NCTC 11828).